The chain runs to 274 residues: Elongation factor Ts (274 aa).

The involved in Mg(2+) ion dislocation from EF-Tu stretch occupies residues 82–85; it reads TDFV.

It belongs to the EF-Ts family.

It localises to the cytoplasm. In terms of biological role, associates with the EF-Tu.GDP complex and induces the exchange of GDP to GTP. It remains bound to the aminoacyl-tRNA.EF-Tu.GTP complex up to the GTP hydrolysis stage on the ribosome. This is Elongation factor Ts from Flavobacterium psychrophilum (strain ATCC 49511 / DSM 21280 / CIP 103535 / JIP02/86).